Consider the following 305-residue polypeptide: UDP-N-acetylenolpyruvoylglucosamine reductase (305 aa).

One can recognise an FAD-binding PCMH-type domain in the interval Lys-22–Gly-190. Arg-169 is an active-site residue. Residue Ser-220 is the Proton donor of the active site. Glu-290 is a catalytic residue.

Belongs to the MurB family. It depends on FAD as a cofactor.

The protein resides in the cytoplasm. It catalyses the reaction UDP-N-acetyl-alpha-D-muramate + NADP(+) = UDP-N-acetyl-3-O-(1-carboxyvinyl)-alpha-D-glucosamine + NADPH + H(+). It functions in the pathway cell wall biogenesis; peptidoglycan biosynthesis. Cell wall formation. The polypeptide is UDP-N-acetylenolpyruvoylglucosamine reductase (Synechococcus sp. (strain RCC307)).